A 207-amino-acid chain; its full sequence is Protein FMP32, mitochondrial (207 aa).

The stretch at 100–136 forms a coiled coil; sequence ADRSEFHNIQNEYESVKNDLEKLRNKLREEITKTNAG. A helical membrane pass occupies residues 184–206; sequence VMQWLIGVCTGTFALVLAYMRLL.

It belongs to the CCDC90 family.

It is found in the mitochondrion. The protein resides in the membrane. The protein is Protein FMP32, mitochondrial (FMP32) of Saccharomyces cerevisiae (strain ATCC 204508 / S288c) (Baker's yeast).